The primary structure comprises 1230 residues: ABC transporter B family member 5 (1230 aa).

Helical transmembrane passes span 27-47 (VLLM…SPLM), 78-98 (LVYL…CWMI), 154-174 (FIQL…RGWL), 177-197 (LVML…AIIV), 253-273 (GFVT…TYAL), and 286-306 (GYTG…SIAL). The 289-residue stretch at 30 to 318 (MIVGSIGAIA…ASPCLTAFTA (289 aa)) folds into the ABC transmembrane type-1 1 domain. Residues 353–589 (IELRDVCFSY…HEGAYSQLLR (237 aa)) form the ABC transporter 1 domain. 388-395 (GESGSGKS) is an ATP binding site. N-linked (GlcNAc...) asparagine glycans are attached at residues Asn-540, Asn-615, and Asn-616. Residues 602-621 (ISDGSISSGSSRGNNSTRQD) are disordered. Positions 603–617 (SDGSISSGSSRGNNS) are enriched in low complexity. 2 helical membrane passes run 662–682 (ILIL…IFGI) and 707–727 (MIFV…NYLF). Residues 663–950 (LILGTLVGAV…ASSFAPDSSK (288 aa)) enclose the ABC transmembrane type-1 2 domain. Asn-759 carries an N-linked (GlcNAc...) asparagine glycan. Helical transmembrane passes span 798 to 818 (IIAF…IPFI), 889 to 909 (GVGF…CFYV), and 924 to 944 (VFQV…ASSF). Positions 985 to 1223 (IELCHISFTY…EGGVYASLVQ (239 aa)) constitute an ABC transporter 2 domain. Position 1020 to 1027 (1020 to 1027 (GESGSGKS)) interacts with ATP. N-linked (GlcNAc...) asparagine glycans are attached at residues Asn-1074, Asn-1174, and Asn-1227.

The protein belongs to the ABC transporter superfamily. ABCB family. Multidrug resistance exporter (TC 3.A.1.201) subfamily.

The protein localises to the membrane. This chain is ABC transporter B family member 5 (ABCB5), found in Arabidopsis thaliana (Mouse-ear cress).